A 184-amino-acid chain; its full sequence is Elongation factor P (184 aa).

It belongs to the elongation factor P family.

It is found in the cytoplasm. It functions in the pathway protein biosynthesis; polypeptide chain elongation. Its function is as follows. Involved in peptide bond synthesis. Stimulates efficient translation and peptide-bond synthesis on native or reconstituted 70S ribosomes in vitro. Probably functions indirectly by altering the affinity of the ribosome for aminoacyl-tRNA, thus increasing their reactivity as acceptors for peptidyl transferase. This Polaromonas naphthalenivorans (strain CJ2) protein is Elongation factor P.